The chain runs to 560 residues: Choline/ethanolamine transporter FLVCR1 (560 aa).

The segment at methionine 1 to glutamate 43 is disordered. Over methionine 1–proline 92 the chain is Cytoplasmic. Residues arginine 93–glutamine 117 form a helical membrane-spanning segment. Residues tryptophan 118–serine 135 lie on the Extracellular side of the membrane. Residues proline 136–threonine 163 traverse the membrane as a helical segment. Residues arginine 164–glycine 165 lie on the Cytoplasmic side of the membrane. Residues leucine 166 to cysteine 185 traverse the membrane as a helical segment. Over glycine 186–leucine 192 the chain is Extracellular. The helical transmembrane segment at phenylalanine 193–tryptophan 221 threads the bilayer. Glutamine 207 lines the ethanolamine pocket. Topologically, residues phenylalanine 222 to glutamate 226 are cytoplasmic. Residues valine 227–leucine 252 traverse the membrane as a helical segment. Residues valine 253–asparagine 270 are Extracellular-facing. N-linked (GlcNAc...) asparagine glycosylation occurs at asparagine 270. Residues asparagine 271–alanine 300 traverse the membrane as a helical segment. Topologically, residues phenylalanine 301–asparagine 336 are cytoplasmic. A helical membrane pass occupies residues isoleucine 337–tyrosine 367. Topologically, residues tyrosine 368–glutamate 371 are extracellular. Residues glutamate 372–threonine 400 traverse the membrane as a helical segment. The Cytoplasmic segment spans residues lysine 401 to threonine 402. Residues tyrosine 403 to leucine 425 traverse the membrane as a helical segment. Topologically, residues asparagine 426–glycine 428 are extracellular. Residues tyrosine 429–isoleucine 458 traverse the membrane as a helical segment. Residues threonine 459–methionine 466 are Cytoplasmic-facing. The helical transmembrane segment at serine 467–aspartate 492 threads the bilayer. Residue glutamine 476 coordinates ethanolamine. Glutamine 476 contacts choline. Over tyrosine 493 to serine 495 the chain is Extracellular. A helical transmembrane segment spans residues proline 496–lysine 518. Topologically, residues serine 519–leucine 560 are cytoplasmic. Residue serine 542 is modified to Phosphoserine.

Belongs to the major facilitator superfamily. Feline leukemia virus subgroup C receptor (TC 2.A.1.28.1) family.

It is found in the cell membrane. The enzyme catalyses choline(out) = choline(in). The catalysed reaction is ethanolamine(in) = ethanolamine(out). It catalyses the reaction heme b(in) = heme b(out). Its function is as follows. Uniporter that mediates the transport of extracellular choline and ethanolamine into cells, thereby playing a key role in phospholipid biosynthesis. Choline and ethanolamine are the precursors of phosphatidylcholine and phosphatidylethanolamine, respectively, the two most abundant phospholipids. Transport is not coupled with proton transport and is exclusively driven by the choline (or ethanolamine) gradient across the plasma membrane. Also acts as a heme b transporter that mediates heme efflux from the cytoplasm to the extracellular compartment. The polypeptide is Choline/ethanolamine transporter FLVCR1 (Flvcr1) (Mus terricolor (Earth-colored mouse)).